The sequence spans 550 residues: Methyl-coenzyme M reductase I subunit alpha (550 aa).

Residue Q147 participates in coenzyme F430 binding. Coenzyme B-binding positions include R225, 256-257, and R270; that span reads KH. Residue H257 is modified to Pros-methylhistidine. At R271 the chain carries 5-methylarginine. Y333 serves as a coordination point for coenzyme M. Q400 bears the 2-methylglutamine mark. Y444 is a binding site for coenzyme M. G445 carries the post-translational modification 1-thioglycine. D450 carries the (Z)-2,3-didehydroaspartate modification. C452 is modified (S-methylcysteine).

The protein belongs to the methyl-coenzyme M reductase alpha subunit family. In terms of assembly, MCR is a hexamer of two alpha, two beta, and two gamma chains, forming a dimer of heterotrimers. It depends on coenzyme F430 as a cofactor. Post-translationally, the alpha subunit contains six modified amino acids near the active site region. Is methylated on His-257, Arg-271, Gln-400 and Cys-452, probably by the action of specific S-adenosylmethionine-dependent methyltransferases. Also contains a thioglycine at position 445, forming a thiopeptide bond. Contains a didehydroaspartate residue at position 450. The methylation on C5 of Arg-271 is a post-translational methylation not essential in vivo, but which plays a role for the stability and structural integrity of MCR.

The protein resides in the cytoplasm. It carries out the reaction coenzyme B + methyl-coenzyme M = methane + coenzyme M-coenzyme B heterodisulfide. It participates in one-carbon metabolism; methyl-coenzyme M reduction; methane from methyl-coenzyme M: step 1/1. Methyl-coenzyme M reductase activity is inhibited by 3-nitrooxypropanol (3-NOP) in vitro and in vivo, by oxidation of its active site Ni(I), which stops both growth and methanogenesis. Is also inhibited by the reaction product CoM-S-S-CoB. Functionally, component of the methyl-coenzyme M reductase (MCR) I that catalyzes the reductive cleavage of methyl-coenzyme M (CoM-S-CH3 or 2-(methylthio)ethanesulfonate) using coenzyme B (CoB or 7-mercaptoheptanoylthreonine phosphate) as reductant which results in the production of methane and the mixed heterodisulfide of CoB and CoM (CoM-S-S-CoB). This is the final step in methanogenesis. Neither N-6-mercaptohexanoylthreonine phosphate (H-S-HxoTP) nor N-8-mercaptooctanoylthreonine phosphate (H-SOcoTP) nor any other thiol compound such as CoA or CoM can substitute for CoB as the electron donor. The sequence is that of Methyl-coenzyme M reductase I subunit alpha (mcrA) from Methanothermobacter marburgensis (strain ATCC BAA-927 / DSM 2133 / JCM 14651 / NBRC 100331 / OCM 82 / Marburg) (Methanobacterium thermoautotrophicum).